Reading from the N-terminus, the 144-residue chain is Large ribosomal subunit protein uL16 (144 aa).

It belongs to the universal ribosomal protein uL16 family. In terms of assembly, part of the 50S ribosomal subunit.

Its function is as follows. Binds 23S rRNA and is also seen to make contacts with the A and possibly P site tRNAs. The polypeptide is Large ribosomal subunit protein uL16 (Clostridium beijerinckii (strain ATCC 51743 / NCIMB 8052) (Clostridium acetobutylicum)).